A 613-amino-acid chain; its full sequence is Dihydroxy-acid dehydratase (613 aa).

Asp81 is a binding site for Mg(2+). Cys122 lines the [2Fe-2S] cluster pocket. Residues Asp123 and Lys124 each coordinate Mg(2+). Lys124 carries the post-translational modification N6-carboxylysine. Position 195 (Cys195) interacts with [2Fe-2S] cluster. Glu491 is a Mg(2+) binding site. The active-site Proton acceptor is the Ser517.

This sequence belongs to the IlvD/Edd family. As to quaternary structure, homodimer. [2Fe-2S] cluster serves as cofactor. The cofactor is Mg(2+).

The enzyme catalyses (2R)-2,3-dihydroxy-3-methylbutanoate = 3-methyl-2-oxobutanoate + H2O. It catalyses the reaction (2R,3R)-2,3-dihydroxy-3-methylpentanoate = (S)-3-methyl-2-oxopentanoate + H2O. The protein operates within amino-acid biosynthesis; L-isoleucine biosynthesis; L-isoleucine from 2-oxobutanoate: step 3/4. Its pathway is amino-acid biosynthesis; L-valine biosynthesis; L-valine from pyruvate: step 3/4. In terms of biological role, functions in the biosynthesis of branched-chain amino acids. Catalyzes the dehydration of (2R,3R)-2,3-dihydroxy-3-methylpentanoate (2,3-dihydroxy-3-methylvalerate) into 2-oxo-3-methylpentanoate (2-oxo-3-methylvalerate) and of (2R)-2,3-dihydroxy-3-methylbutanoate (2,3-dihydroxyisovalerate) into 2-oxo-3-methylbutanoate (2-oxoisovalerate), the penultimate precursor to L-isoleucine and L-valine, respectively. The sequence is that of Dihydroxy-acid dehydratase from Vibrio vulnificus (strain CMCP6).